The primary structure comprises 488 residues: Diacylglycerol O-acyltransferase 1 (488 aa).

Residues 1-57 form a disordered region; sequence MGDRGSSRRRRTGSRPSSHGGGGPAAAEEEVRDAAAGPDVGAAGDAPAPAPNKDGDA. Residues 1–83 are Cytoplasmic-facing; that stretch reads MGDRGSSRRR…SLFSSDSGFS (83 aa). Residues 1–91 form an involved in homomerization region; that stretch reads MGDRGSSRRR…FSNYRGILNW (91 aa). Serine 17 and serine 18 each carry phosphoserine. Residues 34–47 are compositionally biased toward low complexity; sequence AAAGPDVGAAGDAP. The chain crosses the membrane as a helical span at residues 84-118; sequence NYRGILNWCVVMLILSNARLFLENLIKYGILVDPI. Residues 119-130 lie on the Lumenal side of the membrane; it reads QVVSLFLKDPYS. Positions 119–130 are extracellular loop 1 (EL1); the sequence is QVVSLFLKDPYS. A helical membrane pass occupies residues 131-156; that stretch reads WPAPCLVIAANVFAVAAFQVEKRLAV. The segment at 131–488 is MBOAT fold; sequence WPAPCLVIAA…LNYEAPAAEA (358 aa). The Cytoplasmic segment spans residues 157–161; that stretch reads GALTE. A helical membrane pass occupies residues 162–184; it reads QAGLLLHVANLATILCFPAAVVL. Topologically, residues 185-191 are lumenal; that stretch reads LVESITP. A helical transmembrane segment spans residues 192 to 223; the sequence is VGSLLALMAHTILFLKLFSYRDVNSWCRRARA. Over 224 to 273 the chain is Cytoplasmic; that stretch reads KAASAGKKASSAAAPHTVSYPDNLTYRDLYYFLFAPTLCYELNFPRSPRI. Positions 224–276 are intracellular loop 1 (IL1); sequence KAASAGKKASSAAAPHTVSYPDNLTYRDLYYFLFAPTLCYELNFPRSPRIRKR. A helical transmembrane segment spans residues 274-308; the sequence is RKRFLLRRILEMLFFTQLQVGLIQQWMVPTIQNSM. The Lumenal segment spans residues 309-315; the sequence is KPFKDMD. A helical transmembrane segment spans residues 316-353; it reads YSRIIERLLKLAVPNHLIWLIFFYWLFHSCLNAVAELM. Residues 354–399 lie on the Cytoplasmic side of the membrane; that stretch reads QFGDREFYRDWWNSESVTYFWQNWNIPVHKWCIRHFYKPMLRRGSS. Positions 354 to 399 are intracellular loop 2 (IL2); the sequence is QFGDREFYRDWWNSESVTYFWQNWNIPVHKWCIRHFYKPMLRRGSS. An FYXDWWN motif motif is present at residues 360–366; the sequence is FYRDWWN. An acyl-CoA is bound by residues 374–382, tyrosine 390, and arginine 404; that span reads WQNWNIPVH. The segment at 380–394 is amphipathic helix (AH); the sequence is PVHKWCIRHFYKPML. A helical transmembrane segment spans residues 400–420; the sequence is KWMARTGVFLASAFFHEYLVS. Histidine 415 is a catalytic residue. The Lumenal portion of the chain corresponds to 421 to 428; it reads VPLRMFRL. Residues 429–447 form a helical membrane-spanning segment; it reads WAFTGMMAQIPLAWFVGRF. Over 448 to 449 the chain is Cytoplasmic; it reads FQ. Residues 450–481 form a helical membrane-spanning segment; sequence GNYGNAAVWLSLIIGQPIAVLMYVHDYYVLNY. Position 477 (tyrosine 477) interacts with an acyl-CoA. At 482–488 the chain is on the lumenal side; the sequence is EAPAAEA.

The protein belongs to the membrane-bound acyltransferase family. Sterol o-acyltransferase subfamily. Homodimer or homotetramer; both forms have similar enzymatic activities.

The protein localises to the endoplasmic reticulum membrane. It carries out the reaction an acyl-CoA + a 1,2-diacyl-sn-glycerol = a triacyl-sn-glycerol + CoA. The enzyme catalyses all-trans-retinol + an acyl-CoA = an all-trans-retinyl ester + CoA. It catalyses the reaction 2-(9Z-octadecenoyl)-glycerol + (9Z)-octadecenoyl-CoA = 1,2-di-(9Z-octadecenoyl)-sn-glycerol + CoA. The catalysed reaction is 1,2-di-(9Z-octadecenoyl)-sn-glycerol + (9Z)-octadecenoyl-CoA = 1,2,3-tri-(9Z-octadecenoyl)-glycerol + CoA. It carries out the reaction all-trans-retinol + hexadecanoyl-CoA = all-trans-retinyl hexadecanoate + CoA. The enzyme catalyses 1-O-(9Z-octadecenyl)-glycerol + (9Z)-octadecenoyl-CoA = 1-O-(9Z-octadecyl)-3-(9Z-octadecenoyl)-glycerol + CoA. It catalyses the reaction 1-O-(9Z-octadecyl)-3-(9Z-octadecenoyl)-glycerol + (9Z)-octadecenoyl-CoA = 1-O-(9Z-octadecenyl)-2,3-di-(9Z-octadecenoyl)glycerol + CoA. The catalysed reaction is 1-(9Z-octadecenoyl)-glycerol + (9Z)-octadecenoyl-CoA = 1,2-di-(9Z-octadecenoyl)-glycerol + CoA. It carries out the reaction 1,2-di-(9Z-octadecenoyl)-glycerol + (9Z)-octadecenoate + H(+) = 1,2,3-tri-(9Z-octadecenoyl)-glycerol + H2O. The enzyme catalyses 1-octadecanoyl-2-(5Z,8Z,11Z,14Z-eicosatetraenoyl)-sn-glycerol + (9Z)-octadecenoyl-CoA = 1-octadecanoyl-2-(5Z,8Z,11Z,14Z)-eicosatetraenoyl-3-(9Z)-octadecenoyl-sn-glycerol + CoA. It catalyses the reaction hexadecane-1,2-diol + 2 hexadecanoyl-CoA = 1,2-O,O-dihexadecanoyl-1,2-hexadecanediol + 2 CoA. The catalysed reaction is hexadecane-1,2-diol + hexadecanoyl-CoA = 2-hydroxyhexadecyl hexadecanoate + CoA. It carries out the reaction 2-(9Z-octadecenoyl)-glycerol + hexadecanoyl-CoA = 1-hexadecanoyl-2-(9Z-octadecenoyl)-sn-glycerol + CoA. The enzyme catalyses 1,2-di-(9Z-octadecenoyl)-sn-glycerol + hexadecanoyl-CoA = 1,2-di-(9Z)-octadecenoyl-3-hexadecanoyl-sn-glycerol + CoA. It catalyses the reaction hexadecan-1-ol + hexadecanoyl-CoA = hexadecanyl hexadecanoate + CoA. The catalysed reaction is 13-cis-retinol + hexadecanoyl-CoA = 13-cis-retinyl hexadecanoate + CoA. It carries out the reaction 1,3-di-(9Z-octadecenoyl)-glycerol + (9Z)-octadecenoyl-CoA = 1,2,3-tri-(9Z-octadecenoyl)-glycerol + CoA. The enzyme catalyses 2,3-di-(9Z)-octadecenoyl-sn-glycerol + (9Z)-octadecenoyl-CoA = 1,2,3-tri-(9Z-octadecenoyl)-glycerol + CoA. It functions in the pathway lipid metabolism; glycerolipid metabolism. Its activity is regulated as follows. XP620 is a selective DGAT1 inhibitor. Its function is as follows. Catalyzes the terminal and only committed step in triacylglycerol synthesis by using diacylglycerol and fatty acyl CoA as substrates. Highly expressed in epithelial cells of the small intestine and its activity is essential for the absorption of dietary fats. In liver, plays a role in esterifying exogenous fatty acids to glycerol, and is required to synthesize fat for storage. Also present in female mammary glands, where it produces fat in the milk. May be involved in VLDL (very low density lipoprotein) assembly. In contrast to DGAT2 it is not essential for survival. Functions as the major acyl-CoA retinol acyltransferase (ARAT) in the skin, where it acts to maintain retinoid homeostasis and prevent retinoid toxicity leading to skin and hair disorders. Exhibits additional acyltransferase activities, includin acyl CoA:monoacylglycerol acyltransferase (MGAT), wax monoester and wax diester synthases. Also able to use 1-monoalkylglycerol (1-MAkG) as an acyl acceptor for the synthesis of monoalkyl-monoacylglycerol (MAMAG). This Homo sapiens (Human) protein is Diacylglycerol O-acyltransferase 1.